The chain runs to 281 residues: ATP phosphoribosyltransferase (281 aa).

The protein belongs to the ATP phosphoribosyltransferase family. Long subfamily. Mg(2+) is required as a cofactor.

It is found in the cytoplasm. It carries out the reaction 1-(5-phospho-beta-D-ribosyl)-ATP + diphosphate = 5-phospho-alpha-D-ribose 1-diphosphate + ATP. It functions in the pathway amino-acid biosynthesis; L-histidine biosynthesis; L-histidine from 5-phospho-alpha-D-ribose 1-diphosphate: step 1/9. Feedback inhibited by histidine. Functionally, catalyzes the condensation of ATP and 5-phosphoribose 1-diphosphate to form N'-(5'-phosphoribosyl)-ATP (PR-ATP). Has a crucial role in the pathway because the rate of histidine biosynthesis seems to be controlled primarily by regulation of HisG enzymatic activity. This chain is ATP phosphoribosyltransferase, found in Corynebacterium jeikeium (strain K411).